Here is a 140-residue protein sequence, read N- to C-terminus: MALIYKTVAQTETGREGSVKTLDGFQTKLSFPKPDLSVQTENNPEQLFASAYASCFSQAVIVVMQQHQFSFSKKPVVSVKVELHQENGLFHIKAGVELTTNSNDQEVGKKLIQKAHEMCPFSRLIRNENFLGLTLNGIKL.

This sequence belongs to the OsmC/Ohr family.

The protein is Organic hydroperoxide resistance protein-like of Mycoplasma genitalium (strain ATCC 33530 / DSM 19775 / NCTC 10195 / G37) (Mycoplasmoides genitalium).